A 546-amino-acid chain; its full sequence is 2-isopropylmalate synthase (546 aa).

The Pyruvate carboxyltransferase domain maps to 8–271 (ILIFDTTLRD…NSFFGRSSDS (264 aa)). Residues D17, H208, H210, and N244 each coordinate Mn(2+). The interval 408–546 (QLSHVQVSCG…EKKVFSNPKN (139 aa)) is regulatory domain.

This sequence belongs to the alpha-IPM synthase/homocitrate synthase family. LeuA type 1 subfamily. In terms of assembly, homodimer. Mn(2+) is required as a cofactor.

It localises to the cytoplasm. The enzyme catalyses 3-methyl-2-oxobutanoate + acetyl-CoA + H2O = (2S)-2-isopropylmalate + CoA + H(+). Its pathway is amino-acid biosynthesis; L-leucine biosynthesis; L-leucine from 3-methyl-2-oxobutanoate: step 1/4. Catalyzes the condensation of the acetyl group of acetyl-CoA with 3-methyl-2-oxobutanoate (2-ketoisovalerate) to form 3-carboxy-3-hydroxy-4-methylpentanoate (2-isopropylmalate). The sequence is that of 2-isopropylmalate synthase from Prochlorococcus marinus (strain MIT 9515).